A 62-amino-acid chain; its full sequence is Enterocin E-760 (62 aa).

It localises to the secreted. Its function is as follows. Bacteriocin active against the Gram-negative bacteria S.enteritidis, S.choleraesuis, S.typhimurium, S.gallinarum, E.coli O157:H7, Y.enterocolitica, C.freundii, K.pneumoniae, S.dysentriae, P.aeruginosa, P.mirabilis, M.morganii, C.jejuni and 20 other Campylobacter isolates, and the Gram-positive bacteria S.aureus, S.epidermidis and L.monocytogenes. In Enterococcus sp, this protein is Enterocin E-760.